A 938-amino-acid chain; its full sequence is Ubiquitin carboxyl-terminal hydrolase Usp2 (938 aa).

Disordered stretches follow at residues methionine 1 to alanine 53, lysine 91 to arginine 117, phenylalanine 130 to threonine 254, glutamate 273 to proline 297, leucine 360 to glutamine 410, and lysine 500 to glutamate 610. Residues serine 22–serine 36 show a composition bias toward low complexity. Composition is skewed to low complexity over residues threonine 137–asparagine 158, serine 167–threonine 177, methionine 198–glutamine 227, and asparagine 275–serine 289. Over residues alanine 392–glutamine 410 the composition is skewed to polar residues. Composition is skewed to low complexity over residues alanine 502 to serine 555 and threonine 574 to serine 583. Over residues histidine 592–glutamate 610 the composition is skewed to basic and acidic residues. The USP domain maps to cysteine 613 to threonine 938. Catalysis depends on cysteine 622, which acts as the Nucleophile. Residues cysteine 765, cysteine 768, cysteine 814, and cysteine 817 each coordinate Zn(2+). The active-site Proton acceptor is the histidine 895.

This sequence belongs to the peptidase C19 family. As to quaternary structure, interacts (via N-terminus) with imd (via N-terminus). Interacts with Rpt6.

The catalysed reaction is Thiol-dependent hydrolysis of ester, thioester, amide, peptide and isopeptide bonds formed by the C-terminal Gly of ubiquitin (a 76-residue protein attached to proteins as an intracellular targeting signal).. In terms of biological role, hydrolase that deubiquitinates polyubiquitinated target proteins. Required for preventing the activation of the Toll signaling cascades under unchallenged conditions. Essential for bodily calcium homeostasis. Functionally, required for preventing the activation of the immune deficiency (Imd) signaling cascade under unchallenged conditions. Regulates the Imd pathway by specifically removing 'Lys-48'-linked ubiquitin from imd. Also promotes imd degradation probably by binding to imd and enhancing its association with the proteasome. This Drosophila melanogaster (Fruit fly) protein is Ubiquitin carboxyl-terminal hydrolase Usp2.